A 241-amino-acid chain; its full sequence is Uridylate kinase (241 aa).

14–17 provides a ligand contact to ATP; it reads KLSG. Position 56 (Gly-56) interacts with UMP. 2 residues coordinate ATP: Gly-57 and Arg-61. UMP contacts are provided by residues Asp-77 and 138–145; that span reads TGNPFFTT. Thr-165, Tyr-171, and Asp-174 together coordinate ATP.

This sequence belongs to the UMP kinase family. In terms of assembly, homohexamer.

It is found in the cytoplasm. It catalyses the reaction UMP + ATP = UDP + ADP. It participates in pyrimidine metabolism; CTP biosynthesis via de novo pathway; UDP from UMP (UMPK route): step 1/1. With respect to regulation, inhibited by UTP. Catalyzes the reversible phosphorylation of UMP to UDP. The chain is Uridylate kinase from Psychrobacter cryohalolentis (strain ATCC BAA-1226 / DSM 17306 / VKM B-2378 / K5).